Reading from the N-terminus, the 256-residue chain is Triosephosphate isomerase (256 aa).

Substrate is bound at residue 10–12; sequence NWK. Residue His-99 is the Electrophile of the active site. Glu-171 acts as the Proton acceptor in catalysis. Residues Gly-177, Ser-216, and 237 to 238 contribute to the substrate site; that span reads GG.

This sequence belongs to the triosephosphate isomerase family. Homodimer.

It localises to the cytoplasm. It catalyses the reaction D-glyceraldehyde 3-phosphate = dihydroxyacetone phosphate. It functions in the pathway carbohydrate biosynthesis; gluconeogenesis. It participates in carbohydrate degradation; glycolysis; D-glyceraldehyde 3-phosphate from glycerone phosphate: step 1/1. Involved in the gluconeogenesis. Catalyzes stereospecifically the conversion of dihydroxyacetone phosphate (DHAP) to D-glyceraldehyde-3-phosphate (G3P). The sequence is that of Triosephosphate isomerase from Colwellia psychrerythraea (strain 34H / ATCC BAA-681) (Vibrio psychroerythus).